The following is a 749-amino-acid chain: Patatin-like phospholipase domain-containing protein An01g04180 (749 aa).

A disordered region spans residues 1–21 (MNGAEKSAAGDTYDPSTIPDY). A helical transmembrane segment spans residues 87 to 107 (WPFLFTVFGWITALAFAYTLT). One can recognise a PNPLA domain in the interval 277 to 468 (LCLSGGATFA…RTDIPIKALN (192 aa)). The GXSXG motif lies at 308–312 (GTSGG). Ser310 functions as the Nucleophile in the catalytic mechanism. Catalysis depends on Asp455, which acts as the Proton acceptor. A disordered region spans residues 619-726 (AGGRPISPAP…STGSSIFEEV (108 aa)). Over residues 649 to 664 (PLNERLDHNLPERRGD) the composition is skewed to basic and acidic residues. Residues 685-707 (SLSENSSNESAARPSSSSSSSRL) are compositionally biased toward low complexity.

Belongs to the PLPL family.

The protein resides in the membrane. Functionally, probable lipid hydrolase. The protein is Patatin-like phospholipase domain-containing protein An01g04180 of Aspergillus niger (strain ATCC MYA-4892 / CBS 513.88 / FGSC A1513).